The following is a 276-amino-acid chain: Glucosamine-6-phosphate deaminase 2 (276 aa).

The active-site Proton acceptor; for enolization step is the Asp72. Positions 105 to 130 form a coiled coil; the sequence is HILDGNAADLQAECDAFENKIKEAGG. Asp141 (for ring-opening step) is an active-site residue. Residue His143 is the Proton acceptor; for ring-opening step of the active site. Residue Glu148 is the For ring-opening step of the active site. Thr161 carries the phosphothreonine modification.

Belongs to the glucosamine/galactosamine-6-phosphate isomerase family. Homohexamer. In terms of tissue distribution, ubiquitous, with highest expression detected in testis, ovary, placenta, and heart.

The protein localises to the cytoplasm. The enzyme catalyses alpha-D-glucosamine 6-phosphate + H2O = beta-D-fructose 6-phosphate + NH4(+). Its pathway is nucleotide-sugar biosynthesis; UDP-N-acetyl-alpha-D-glucosamine biosynthesis; alpha-D-glucosamine 6-phosphate from D-fructose 6-phosphate: step 1/1. Its activity is regulated as follows. Allosterically activated by N-acetylglucosamine-6-phosphate (GlcNAc6P). In terms of biological role, catalyzes the reversible conversion of alpha-D-glucosamine 6-phosphate (GlcN-6P) into beta-D-fructose 6-phosphate (Fru-6P) and ammonium ion, a regulatory reaction step in de novo uridine diphosphate-N-acetyl-alpha-D-glucosamine (UDP-GlcNAc) biosynthesis via hexosamine pathway. Deamination is coupled to aldo-keto isomerization mediating the metabolic flux from UDP-GlcNAc toward Fru-6P. At high ammonium level can drive amination and isomerization of Fru-6P toward hexosamines and UDP-GlcNAc synthesis. Has a role in fine tuning the metabolic fluctuations of cytosolic UDP-GlcNAc and their effects on hyaluronan synthesis that occur during tissue remodeling. The sequence is that of Glucosamine-6-phosphate deaminase 2 from Homo sapiens (Human).